The sequence spans 69 residues: MDNRLLEILVCPLCKGKLEYDRAAQELICHADKLAYPIRDGIPVMLADEARQTVPGRVVPVEPSAPAGN.

This sequence belongs to the UPF0434 family.

The protein is UPF0434 protein Rmet_0534 of Cupriavidus metallidurans (strain ATCC 43123 / DSM 2839 / NBRC 102507 / CH34) (Ralstonia metallidurans).